Consider the following 241-residue polypeptide: Major prion protein (241 aa).

The first 15 residues, 1–15 (MLVLFVATWSDLGLC), serve as a signal peptide directing secretion. The segment at 16–31 (KKRPKPGGWNTGGSRY) is interaction with ADGRG6. Residues 16-223 (KKRPKPGGWN…ESQAYYQRGS (208 aa)) form an interaction with GRB2, ERI3 and SYN1 region. Residues 18-100 (RPKPGGWNTG…QWNKPSKPKT (83 aa)) are disordered. 5 consecutive repeat copies span residues 44–52 (PQGGGSWGQ), 53–60 (PHGGGWGQ), 61–68 (PHGGGWGQ), 69–76 (PHGGGWGQ), and 77–84 (PHGGGWGQ). The interval 44–84 (PQGGGSWGQPHGGGWGQPHGGGWGQPHGGGWGQPHGGGWGQ) is 5 X 8 AA tandem repeats of P-H-G-G-G-W-G-Q. Over residues 45–88 (QGGGSWGQPHGGGWGQPHGGGWGQPHGGGWGQPHGGGWGQGGGT) the composition is skewed to gly residues. Cu(2+) is bound by residues His54, Gly55, Gly56, His62, Gly63, Gly64, His70, Gly71, Gly72, His78, Gly79, and Gly80. Cys172 and Cys207 are oxidised to a cystine. Asn174 and Asn190 each carry an N-linked (GlcNAc...) asparagine glycan. Ser223 carries the GPI-anchor amidated serine lipid modification. The propeptide at 224 to 241 (SMVLFSSPPVILLISFLI) is removed in mature form.

The protein belongs to the prion family. Monomer and homodimer. Has a tendency to aggregate into amyloid fibrils containing a cross-beta spine, formed by a steric zipper of superposed beta-strands. Soluble oligomers may represent an intermediate stage on the path to fibril formation. Copper binding may promote oligomerization. Interacts with GRB2, APP, ERI3/PRNPIP and SYN1. Mislocalized cytosolically exposed PrP interacts with MGRN1; this interaction alters MGRN1 subcellular location and causes lysosomal enlargement. Interacts with APP. Interacts with KIAA1191. Interacts with ADGRG6.

The protein resides in the cell membrane. Its subcellular location is the golgi apparatus. Its primary physiological function is unclear. May play a role in neuronal development and synaptic plasticity. May be required for neuronal myelin sheath maintenance. May promote myelin homeostasis through acting as an agonist for ADGRG6 receptor. May play a role in iron uptake and iron homeostasis. Soluble oligomers are toxic to cultured neuroblastoma cells and induce apoptosis (in vitro). Association with GPC1 (via its heparan sulfate chains) targets PRNP to lipid rafts. Also provides Cu(2+) or Zn(2+) for the ascorbate-mediated GPC1 deaminase degradation of its heparan sulfate side chains. This chain is Major prion protein (PRNP), found in Plecturocebus moloch (Dusky titi monkey).